An 814-amino-acid chain; its full sequence is Lon protease (814 aa).

The disordered stretch occupies residues 1-20 (MANEAHNIEHTDPEFRDDSA). The Lon N-terminal domain occupies 25–219 (LPLLPVRDTV…KINQHLAKEL (195 aa)). 372-379 (GPPGVGKT) lines the ATP pocket. A Lon proteolytic domain is found at 610 to 792 (TKRAGVVVGL…DEVLEIALPS (183 aa)). Residues S697 and K740 contribute to the active site.

The protein belongs to the peptidase S16 family. In terms of assembly, homohexamer. Organized in a ring with a central cavity.

It localises to the cytoplasm. It catalyses the reaction Hydrolysis of proteins in presence of ATP.. Its function is as follows. ATP-dependent serine protease that mediates the selective degradation of mutant and abnormal proteins as well as certain short-lived regulatory proteins. Required for cellular homeostasis and for survival from DNA damage and developmental changes induced by stress. Degrades polypeptides processively to yield small peptide fragments that are 5 to 10 amino acids long. Binds to DNA in a double-stranded, site-specific manner. The sequence is that of Lon protease from Koribacter versatilis (strain Ellin345).